Here is a 643-residue protein sequence, read N- to C-terminus: tRNA 5-methylaminomethyl-2-thiouridine biosynthesis bifunctional protein MnmC (643 aa).

Positions 1–223 (MPDRLVSATL…VDDRLVGDYA (223 aa)) are tRNA (mnm(5)s(2)U34)-methyltransferase. The FAD-dependent cmnm(5)s(2)U34 oxidoreductase stretch occupies residues 247-643 (IGAGLAGCAV…LRARRVGSAG (397 aa)).

In the N-terminal section; belongs to the methyltransferase superfamily. tRNA (mnm(5)s(2)U34)-methyltransferase family. The protein in the C-terminal section; belongs to the DAO family. Requires FAD as cofactor.

It is found in the cytoplasm. The enzyme catalyses 5-aminomethyl-2-thiouridine(34) in tRNA + S-adenosyl-L-methionine = 5-methylaminomethyl-2-thiouridine(34) in tRNA + S-adenosyl-L-homocysteine + H(+). In terms of biological role, catalyzes the last two steps in the biosynthesis of 5-methylaminomethyl-2-thiouridine (mnm(5)s(2)U) at the wobble position (U34) in tRNA. Catalyzes the FAD-dependent demodification of cmnm(5)s(2)U34 to nm(5)s(2)U34, followed by the transfer of a methyl group from S-adenosyl-L-methionine to nm(5)s(2)U34, to form mnm(5)s(2)U34. This chain is tRNA 5-methylaminomethyl-2-thiouridine biosynthesis bifunctional protein MnmC, found in Burkholderia orbicola (strain AU 1054).